Reading from the N-terminus, the 227-residue chain is Phage shock protein A homolog (227 aa).

A coiled-coil region spans residues leucine 33–leucine 125. The tract at residues serine 191–glutamine 211 is disordered.

The protein belongs to the PspA/Vipp/IM30 family.

This is Phage shock protein A homolog (ydjF) from Bacillus subtilis (strain 168).